The following is a 256-amino-acid chain: Rhamnolipids biosynthesis 3-oxoacyl-[acyl-carrier-protein] reductase (256 aa).

Position 14 to 38 (14 to 38 (VTGGSRGIGQMIAQGLLEAGARVFI)) interacts with NADP(+). Position 148 (serine 148) interacts with substrate. Residue tyrosine 162 is the Proton acceptor of the active site.

Belongs to the short-chain dehydrogenases/reductases (SDR) family.

It carries out the reaction a (3R)-hydroxyacyl-[ACP] + NADP(+) = a 3-oxoacyl-[ACP] + NADPH + H(+). It participates in lipid metabolism; rhamnolipid biosynthesis. Its function is as follows. Required for the synthesis of the beta-hydroxy acid moiety of rhamnolipids. The polypeptide is Rhamnolipids biosynthesis 3-oxoacyl-[acyl-carrier-protein] reductase (rhlG) (Pseudomonas aeruginosa (strain ATCC 15692 / DSM 22644 / CIP 104116 / JCM 14847 / LMG 12228 / 1C / PRS 101 / PAO1)).